We begin with the raw amino-acid sequence, 210 residues long: Inner membrane-spanning protein YciB (210 aa).

A run of 6 helical transmembrane segments spans residues 19–39 (LVLELGPLMVFFFANSRGDWL), 53–73 (IFIATGLFMAATATALIVSWI), 78–98 (LPMMPLISGIVVFVFGALTLW), 115–135 (LFGAILLGGLLFGKSLLGYVF), 148–168 (KLTIRWGVFFLFLAVLNEIVW), and 175–195 (FWVAFKVWGTMPITILFTLAQ).

It belongs to the YciB family.

It is found in the cell inner membrane. Its function is as follows. Plays a role in cell envelope biogenesis, maintenance of cell envelope integrity and membrane homeostasis. This Sinorhizobium fredii (strain NBRC 101917 / NGR234) protein is Inner membrane-spanning protein YciB.